The following is a 457-amino-acid chain: ATP synthase subunit beta (457 aa).

147–154 contacts ATP; sequence GGAGVGKT.

Belongs to the ATPase alpha/beta chains family. As to quaternary structure, F-type ATPases have 2 components, CF(1) - the catalytic core - and CF(0) - the membrane proton channel. CF(1) has five subunits: alpha(3), beta(3), gamma(1), delta(1), epsilon(1). CF(0) has three main subunits: a(1), b(2) and c(9-12). The alpha and beta chains form an alternating ring which encloses part of the gamma chain. CF(1) is attached to CF(0) by a central stalk formed by the gamma and epsilon chains, while a peripheral stalk is formed by the delta and b chains.

The protein resides in the cell inner membrane. The catalysed reaction is ATP + H2O + 4 H(+)(in) = ADP + phosphate + 5 H(+)(out). Produces ATP from ADP in the presence of a proton gradient across the membrane. The catalytic sites are hosted primarily by the beta subunits. The protein is ATP synthase subunit beta of Haemophilus influenzae (strain PittEE).